The chain runs to 213 residues: A-type ATP synthase subunit D (213 aa).

It belongs to the V-ATPase D subunit family. In terms of assembly, has multiple subunits with at least A(3), B(3), C, D, E, F, H, I and proteolipid K(x).

The protein localises to the cell membrane. Functionally, component of the A-type ATP synthase that produces ATP from ADP in the presence of a proton gradient across the membrane. The polypeptide is A-type ATP synthase subunit D (Saccharolobus islandicus (strain Y.N.15.51 / Yellowstone #2) (Sulfolobus islandicus)).